The following is a 177-amino-acid chain: RNA pyrophosphohydrolase (177 aa).

Positions 6–149 (GYRPNVGIVI…KRDVYRRVMK (144 aa)) constitute a Nudix hydrolase domain. Positions 38–59 (GGINAGETAEQAMYRELFEEVG) match the Nudix box motif.

The protein belongs to the Nudix hydrolase family. RppH subfamily. Requires a divalent metal cation as cofactor.

Its function is as follows. Accelerates the degradation of transcripts by removing pyrophosphate from the 5'-end of triphosphorylated RNA, leading to a more labile monophosphorylated state that can stimulate subsequent ribonuclease cleavage. The protein is RNA pyrophosphohydrolase of Edwardsiella ictaluri (strain 93-146).